Here is a 66-residue protein sequence, read N- to C-terminus: Large ribosomal subunit protein uL29 (66 aa).

It belongs to the universal ribosomal protein uL29 family.

The polypeptide is Large ribosomal subunit protein uL29 (Ruegeria pomeroyi (strain ATCC 700808 / DSM 15171 / DSS-3) (Silicibacter pomeroyi)).